We begin with the raw amino-acid sequence, 466 residues long: Glutamate--tRNA ligase (466 aa).

A 'HIGH' region motif is present at residues 10 to 20 (PSPTGALHIGG). C99, C101, C126, and D128 together coordinate Zn(2+). A 'KMSKS' region motif is present at residues 239–243 (KLSKR). K242 lines the ATP pocket.

Belongs to the class-I aminoacyl-tRNA synthetase family. Glutamate--tRNA ligase type 1 subfamily. As to quaternary structure, monomer. The cofactor is Zn(2+).

It localises to the cytoplasm. It carries out the reaction tRNA(Glu) + L-glutamate + ATP = L-glutamyl-tRNA(Glu) + AMP + diphosphate. In terms of biological role, catalyzes the attachment of glutamate to tRNA(Glu) in a two-step reaction: glutamate is first activated by ATP to form Glu-AMP and then transferred to the acceptor end of tRNA(Glu). The protein is Glutamate--tRNA ligase of Pelagibacter ubique (strain HTCC1062).